Consider the following 345-residue polypeptide: MLPTVNNNIVIALDAMGGDFAPLSVIQGASFFLDNLVDPGVEVFFHIYGDQKEISPLLSKYKKVSDNSEFTHCSDNVLPNDKPSFALRHRKDSSMKAAVEAVKKGKAFGMVSSGNTGALMAVSRFILGTLPNIYRPAIASVCPTKTKSFALLDLGANVDCNTDSLFQFALMGSIFAKIALKVENPEVALLNIGTEEVKGTDSVRGAFELLKNAPSINFKGYIEASEFLDGNIDVIVADGFVGNVMLKTAEATAGTFISLIKQEVFNSWMTKMLVGILLKPKLNKALERFNPKIRSGAMFLGLNGIIIKSHGNSDAISFAHAIKFAVNAISENLNQKIINGVSHIE.

Belongs to the PlsX family. In terms of assembly, homodimer. Probably interacts with PlsY.

Its subcellular location is the cytoplasm. It catalyses the reaction a fatty acyl-[ACP] + phosphate = an acyl phosphate + holo-[ACP]. It functions in the pathway lipid metabolism; phospholipid metabolism. Functionally, catalyzes the reversible formation of acyl-phosphate (acyl-PO(4)) from acyl-[acyl-carrier-protein] (acyl-ACP). This enzyme utilizes acyl-ACP as fatty acyl donor, but not acyl-CoA. The sequence is that of Phosphate acyltransferase from Wolbachia pipientis subsp. Culex pipiens (strain wPip).